We begin with the raw amino-acid sequence, 23 residues long: Caerulein precursor fragment R6 (23 aa).

In terms of tissue distribution, expressed by the skin glands.

It is found in the secreted. In terms of biological role, antimicrobial peptide. This chain is Caerulein precursor fragment R6, found in Xenopus ruwenzoriensis (Uganda clawed frog).